We begin with the raw amino-acid sequence, 336 residues long: Dual specificity mitogen-activated protein kinase kinase sek-1 (336 aa).

A Protein kinase domain is found at L50–M311. Residues L56–V64 and K79 each bind ATP. D176 functions as the Proton acceptor in the catalytic mechanism. S204 carries the phosphoserine modification. A Phosphothreonine modification is found at T208.

Belongs to the protein kinase superfamily. STE Ser/Thr protein kinase family. MAP kinase kinase subfamily. As to quaternary structure, interacts with nsy-1. Interacts with unc-16. Requires Mg(2+) as cofactor. Expressed in linker cell in males.

It catalyses the reaction L-seryl-[protein] + ATP = O-phospho-L-seryl-[protein] + ADP + H(+). The enzyme catalyses L-threonyl-[protein] + ATP = O-phospho-L-threonyl-[protein] + ADP + H(+). It carries out the reaction L-tyrosyl-[protein] + ATP = O-phospho-L-tyrosyl-[protein] + ADP + H(+). With respect to regulation, activated by nsy-1-mediated phosphorylation. Its function is as follows. Dual specificity protein kinase which acts as an essential component of the p38 signal transduction pathway which is also composed of upstream effector nsy-1 and downstream effector pmk-1. May phosphorylate pmk-1. Downstream of CaMKII unc-43 and adapter protein tir-1, plays a role in determining asymmetric cell fates in olfactory AWC neurons during neuronal development. Activation results in the repression of odorant receptor str-2 expression in one of the 2 AWC neurons. Involved in resistance to pathogenic Gram-positive and Gram-negative bacterial and fungal infection. Involved in resistance to the nematotoxic C.cinerea galectin Cgl2. Probably by promoting pmk-1-mediated activation of skn-1, involved in the up-regulation of gcs-1 and glutathione-S-transferase gst-4 expression upon bacterial infection. Probably downstream of tir-1, required for the expression of antimicrobial peptide nlp-29 in the epidermis in response to fungal infection or physical injury. Regulates susceptibility of B.thuringiensis pore-forming toxin Cry5B and Cry21A. Involved in the response to oxidative stress. May regulate transcription factor daf-16 localization during oxidative stress. By phosphorylating pmk-1, regulates skn-1 localization during oxidative stress. By phosphorylating and activating pmk-1, plays a role in the stabilization of transcription factor rnt-1 in the intestine during oxidative stress. Up-regulates expression of gcs-1 in intestine upon arsenite treatment. Regulates germline proliferation in response to osmotic stress, starvation and germline apoptosis induced by heavy metals, such as Cu(2+). In association with mek-1, regulates germline cell apoptosis in response to oxidative, osmotic and heat shock stresses. Plays a role downstream of tir-1/nsy-1 in regulating susceptibility to anoxia. In males, by regulating pqn-41 expression, involved in non-apoptotic death of the linker cell which guides gonad elongation during larval development. Involved in egg laying. This is Dual specificity mitogen-activated protein kinase kinase sek-1 from Caenorhabditis elegans.